The primary structure comprises 381 residues: tRNA (guanine(6)-N2)-methyltransferase (381 aa).

The THUMP domain occupies 43 to 157; the sequence is KLIPKINYLS…FDELIVGIDT (115 aa). Residues 173–177, 204–206, D261, 289–290, and N306 each bind S-adenosyl-L-methionine; these read HPAHL, SGT, and DA.

It belongs to the methyltransferase superfamily.

The protein resides in the cytoplasm. The catalysed reaction is guanosine(6) in tRNA + S-adenosyl-L-methionine = N(2)-methylguanosine(6) in tRNA + S-adenosyl-L-homocysteine + H(+). S-adenosyl-L-methionine-dependent methyltransferase that catalyzes the methylation of the guanosine nucleotide at position 6 (m2G6) in tRNA(Cys). The protein is tRNA (guanine(6)-N2)-methyltransferase of Methanocaldococcus jannaschii (strain ATCC 43067 / DSM 2661 / JAL-1 / JCM 10045 / NBRC 100440) (Methanococcus jannaschii).